The primary structure comprises 187 residues: Large ribosomal subunit protein uL5 (187 aa).

It belongs to the universal ribosomal protein uL5 family. As to quaternary structure, part of the 50S ribosomal subunit; part of the 5S rRNA/L5/L18/L25 subcomplex. Contacts the 5S rRNA and the P site tRNA. Forms a bridge to the 30S subunit in the 70S ribosome.

Functionally, this is one of the proteins that bind and probably mediate the attachment of the 5S RNA into the large ribosomal subunit, where it forms part of the central protuberance. In the 70S ribosome it contacts protein S13 of the 30S subunit (bridge B1b), connecting the 2 subunits; this bridge is implicated in subunit movement. Contacts the P site tRNA; the 5S rRNA and some of its associated proteins might help stabilize positioning of ribosome-bound tRNAs. The protein is Large ribosomal subunit protein uL5 of Mycobacterium sp. (strain JLS).